A 396-amino-acid polypeptide reads, in one-letter code: Elongation factor Tu (396 aa).

A tr-type G domain is found at 10–206 (KPHVNVGTIG…ALDTYIPTPE (197 aa)). The G1 stretch occupies residues 19–26 (GHVDHGKT). 19 to 26 (GHVDHGKT) provides a ligand contact to GTP. Thr-26 is a Mg(2+) binding site. Positions 60–64 (GITIN) are G2. Residues 81–84 (DCPG) form a G3 region. Residues 81 to 85 (DCPGH) and 136 to 139 (NKCD) each bind GTP. Residues 136–139 (NKCD) form a G4 region. Residues 174–176 (SAK) are G5.

This sequence belongs to the TRAFAC class translation factor GTPase superfamily. Classic translation factor GTPase family. EF-Tu/EF-1A subfamily. In terms of assembly, monomer.

The protein resides in the cytoplasm. The enzyme catalyses GTP + H2O = GDP + phosphate + H(+). Its function is as follows. GTP hydrolase that promotes the GTP-dependent binding of aminoacyl-tRNA to the A-site of ribosomes during protein biosynthesis. The protein is Elongation factor Tu of Cupriavidus pinatubonensis (strain JMP 134 / LMG 1197) (Cupriavidus necator (strain JMP 134)).